The primary structure comprises 299 residues: Taste receptor type 2 member 4 (299 aa).

Residues 1 to 9 (MLRLFYFSA) lie on the Extracellular side of the membrane. A helical transmembrane segment spans residues 10–30 (IIASVILNFVGIIMNLFITVV). Topologically, residues 31 to 46 (NCKTWVKSHRISSSDR) are cytoplasmic. A helical transmembrane segment spans residues 47 to 67 (ILFSLGITRFLMLGLFLVNTI). Residues 68 to 81 (YFVSSNTERSVYLS) are Extracellular-facing. Residues 82–102 (AFFVLCFMFLDSSSVWFVTLL) form a helical membrane-spanning segment. The Cytoplasmic segment spans residues 103-131 (NILYCVKITNFQHSVFLLLKRNISPKIPR). Residues 132 to 152 (LLLACVLISAFTTCLYITLSQ) form a helical membrane-spanning segment. Residues 153-172 (ASPFPELVTTRNNTSFNISE) lie on the Extracellular side of the membrane. 3 N-linked (GlcNAc...) asparagine glycosylation sites follow: asparagine 164, asparagine 165, and asparagine 169. Residues 173 to 193 (GILSLVVSLVLSSSLQFIINV) traverse the membrane as a helical segment. The Cytoplasmic segment spans residues 194–230 (TSASLLIHSLRRHIQKMQKNATGFWNPQTEAHVGAMK). Residues 231–251 (LMVYFLILYIPYSVATLVQYL) traverse the membrane as a helical segment. The Extracellular portion of the chain corresponds to 252 to 262 (PFYAGMDMGTK). A helical membrane pass occupies residues 263 to 283 (SICLIFATLYSPGHSVLIIIT). At 284–299 (HPKLKTTAKKILCFKK) the chain is on the cytoplasmic side.

It belongs to the G-protein coupled receptor T2R family. As to expression, expressed in subsets of taste receptor cells of the tongue and palate epithelium and exclusively in gustducin-positive cells. Expressed on airway ciliated epithelium.

The protein localises to the membrane. Its subcellular location is the cell projection. It is found in the cilium membrane. Functionally, gustducin-coupled receptor for denatonium and N(6)-propyl-2-thiouracil implicated in the perception of bitter compounds in the oral cavity and the gastrointestinal tract. Signals through PLCB2 and the calcium-regulated cation channel TRPM5. In airway epithelial cells, binding of denatonium increases the intracellular calcium ion concentration and stimulates ciliary beat frequency. The protein is Taste receptor type 2 member 4 (TAS2R4) of Homo sapiens (Human).